The primary structure comprises 3381 residues: Versican core protein (3381 aa).

The N-terminal stretch at 1 to 20 is a signal peptide; sequence MLINIKSILWMCSTLIAAHA. The Ig-like V-type domain occupies 21-147; sequence LQKVNMEKSP…EDTQDTVSLT (127 aa). Disulfide bonds link C44-C131, C173-C244, C197-C218, C271-C346, and C295-C316. N-linked (GlcNAc...) asparagine glycosylation is present at N57. 2 consecutive Link domains span residues 151-246 and 252-348; these read VVFH…YCYV and DVFH…YCFK. N-linked (GlcNAc...) asparagine glycosylation is found at N331 and N352. The segment at 349 to 1336 is GAG-alpha (glucosaminoglycan attachment domain); that stretch reads PKQNISEATT…IIEVRENKTG (988 aa). Positions 417-427 are enriched in polar residues; it reads PLTSTHRSATE. 2 disordered regions span residues 417 to 437 and 603 to 623; these read PLTS…SMKK and ESVS…MDHR. S660 carries an O-linked (Xyl...) (chondroitin sulfate) serine glycan. A disordered region spans residues 816-866; sequence DNTTSKPLGSTEHVGSPKLPPALITTTGVSGKDKEMPSLTEDGRDEFTRIP. A glycan (N-linked (GlcNAc...) asparagine) is linked at N817. The span at 846–863 shows a compositional bias: basic and acidic residues; the sequence is GKDKEMPSLTEDGRDEFT. Residues N965 and N1017 are each glycosylated (N-linked (GlcNAc...) asparagine). Positions 1043–1052 are enriched in basic and acidic residues; sequence EDFLWKEQTP. Disordered regions lie at residues 1043-1081 and 1218-1244; these read EDFL…SDGS and FSSA…PDEE. The N-linked (GlcNAc...) asparagine glycan is linked to N1333. Residues 1337 to 3074 are GAG-beta; that stretch reads RMSDFSVSGH…VEGTAVYLPG (1738 aa). A disordered region spans residues 1338–1362; that stretch reads MSDFSVSGHPIDSESKEDEPCSEET. Residues 1352–1362 are compositionally biased toward acidic residues; the sequence is SKEDEPCSEET. A glycan (N-linked (GlcNAc...) asparagine) is linked at N1393. A compositionally biased stretch (basic and acidic residues) spans 1417-1428; it reads KDPEAAEARRGQ. 3 disordered regions span residues 1417-1446, 1455-1474, and 1484-1512; these read KDPE…ESDS, GLPT…SLEI, and TAEP…GPDS. N-linked (GlcNAc...) asparagine glycans are attached at residues N1437 and N1463. 2 O-linked (Xyl...) (chondroitin sulfate) serine glycosylation sites follow: S1539 and S1621. Residue N1653 is glycosylated (N-linked (GlcNAc...) asparagine). A disordered region spans residues 1708 to 1785; that stretch reads PPLEETTRKE…ERETTSSTVV (78 aa). The segment covering 1712–1721 has biased composition (basic and acidic residues); sequence ETTRKEEEKG. Residues 1726-1738 show a composition bias toward polar residues; it reads ASTVEVHSPTQRL. Over residues 1743–1761 the composition is skewed to low complexity; the sequence is SPSELESSSETPPDDSAAA. Positions 1764–1784 are enriched in polar residues; that stretch reads KSFTSQMTPTQSERETTSSTV. Residues S1928 and S1952 are each glycosylated (O-linked (Xyl...) (chondroitin sulfate) serine). Positions 1964 to 1976 are enriched in polar residues; it reads PSVTPTSDLSNHT. Disordered stretches follow at residues 1964 to 1986 and 2041 to 2126; these read PSVT…GSTL and EGAI…QSSV. Residues N1974, N2045, N2074, and N2103 are each glycosylated (N-linked (GlcNAc...) asparagine). Residues 2065 to 2075 show a composition bias toward basic and acidic residues; that stretch reads STEEGEVKENH. S2109 bears the Phosphoserine mark. S2240 and S2247 each carry an O-linked (Xyl...) (chondroitin sulfate) serine glycan. N-linked (GlcNAc...) asparagine glycosylation is found at N2263, N2290, and N2356. Disordered stretches follow at residues 2338 to 2388, 2490 to 2512, and 2594 to 2615; these read EGPF…AETK, EQRE…EKAT, and TDLD…TQVQ. Composition is skewed to polar residues over residues 2345–2357 and 2367–2383; these read LTFS…PQNQ and TSRP…ENSV. Phosphoserine occurs at positions 2607 and 2608. A Phosphothreonine modification is found at T2612. N2623 and N2641 each carry an N-linked (GlcNAc...) asparagine glycan. 3 O-linked (Xyl...) (chondroitin sulfate) serine glycosylation sites follow: S2714, S2715, and S2759. The segment at 2819–2893 is disordered; it reads PPLSIHLGSG…EPSEDESKPK (75 aa). The span at 2840-2851 shows a compositional bias: polar residues; sequence ALPSTDASTPPV. N-linked (GlcNAc...) asparagine glycosylation is found at N2919 and N3052. Residues 3074–3110 enclose the EGF-like 1 domain; it reads GPDRCKMNPCLNGGTCYPTETSYVCTCVPGYSGDRCE. 11 disulfide bridges follow: C3078–C3089, C3083–C3098, C3100–C3109, C3116–C3127, C3121–C3136, C3138–C3147, C3154–C3165, C3182–C3274, C3250–C3266, C3281–C3324, and C3310–C3337. One can recognise an EGF-like 2; calcium-binding domain in the interval 3112–3148; that stretch reads DFDECHSNPCRNGATCIDGFNTFRCLCLPSYVGALCE. Residues 3161-3275 form the C-type lectin domain; the sequence is FQGQCYKYFA…CNYHLTYTCK (115 aa). Residues 3279 to 3339 enclose the Sushi domain; the sequence is VACGQPPVVE…WAMPKITCLN (61 aa). 2 N-linked (GlcNAc...) asparagine glycosylation sites follow: N3354 and N3364. A compositionally biased stretch (polar residues) spans 3355–3365; it reads SSSAKDNSINT. Residues 3355–3381 are disordered; sequence SSSAKDNSINTSKHDHRWSRRWQESRR.

Belongs to the aggrecan/versican proteoglycan family. In terms of assembly, interacts with FBLN1. Post-translationally, phosphorylated by FAM20C in the extracellular medium. Proteolytically cleaved by ADAMTS5 and ADAMTS15 in the pericellular matrix surrounding myoblasts, facilitating myoblast contact and fusion which is required for skeletal muscle development and regeneration. Cerebral white matter. Isoform V0 and isoform V1 are expressed in the central nervous system, and in a number of mesenchymal and epithelial tissues; the major isoform V2 is restricted to the central nervous system.

The protein localises to the secreted. It localises to the extracellular space. The protein resides in the extracellular matrix. It is found in the cell projection. Its subcellular location is the cilium. The protein localises to the photoreceptor outer segment. It localises to the interphotoreceptor matrix. Functionally, may play a role in intercellular signaling and in connecting cells with the extracellular matrix. May take part in the regulation of cell motility, growth and differentiation. Binds hyaluronic acid. The polypeptide is Versican core protein (VCAN) (Bos taurus (Bovine)).